The primary structure comprises 726 residues: Probable dipeptidyl-peptidase 5 (726 aa).

Positions 1-19 (MAAAKWLIASLAFASSGLA) are cleaved as a signal peptide. Residues N96 and N252 are each glycosylated (N-linked (GlcNAc...) asparagine). A disordered region spans residues 269 to 291 (AEPINKRNGPRTPQGIEGASSSP). An N-linked (GlcNAc...) asparagine glycan is attached at N485. Residue S558 is the Charge relay system of the active site. N605 carries an N-linked (GlcNAc...) asparagine glycan. Active-site charge relay system residues include D641 and H673. N699 is a glycosylation site (N-linked (GlcNAc...) asparagine).

This sequence belongs to the peptidase S9C family.

Its subcellular location is the secreted. In terms of biological role, extracellular dipeptidyl-peptidase which removes N-terminal dipeptides sequentially from polypeptides having unsubstituted N-termini. Contributes to pathogenicity. The polypeptide is Probable dipeptidyl-peptidase 5 (DPP5) (Arthroderma benhamiae (strain ATCC MYA-4681 / CBS 112371) (Trichophyton mentagrophytes)).